The primary structure comprises 73 residues: UPF0154 protein MG335.1 homolog (73 aa).

The helical transmembrane segment at 6-26 threads the bilayer; the sequence is LALGLGIPLSLLVGVIIGYFI.

Belongs to the UPF0154 family.

It localises to the membrane. This Mycoplasma pneumoniae (strain ATCC 29342 / M129 / Subtype 1) (Mycoplasmoides pneumoniae) protein is UPF0154 protein MG335.1 homolog.